The chain runs to 212 residues: Adenylate kinase (212 aa).

10–15 contributes to the ATP binding site; sequence GAGKGT. The segment at 30 to 59 is NMP; the sequence is STGDMFRAAMANQTEMGTLAKSFIDKGELV. AMP-binding positions include Thr-31, Arg-36, 57–59, 86–89, and Gln-93; these read ELV and GYPR. The interval 127–159 is LID; the sequence is GRIINRKTGETYHKVFNPPADYNEDDYYQREDD. ATP is bound by residues Arg-128 and 137–138; that span reads TY. Residues Arg-156 and Arg-167 each coordinate AMP. Gln-195 serves as a coordination point for ATP.

The protein belongs to the adenylate kinase family. Monomer.

The protein localises to the cytoplasm. It catalyses the reaction AMP + ATP = 2 ADP. Its pathway is purine metabolism; AMP biosynthesis via salvage pathway; AMP from ADP: step 1/1. Catalyzes the reversible transfer of the terminal phosphate group between ATP and AMP. Plays an important role in cellular energy homeostasis and in adenine nucleotide metabolism. This Streptococcus mutans serotype c (strain ATCC 700610 / UA159) protein is Adenylate kinase.